We begin with the raw amino-acid sequence, 601 residues long: Glutathione-regulated potassium-efflux system protein KefB (601 aa).

13 helical membrane passes run 4 to 24 (ADLL…VPLA), 29 to 49 (IGAV…GLGF), 55 to 75 (EILH…GLEL), 87 to 107 (IFGV…GLLM), 111 to 131 (FLWQ…TAMA), 152 to 172 (VLLF…LLAG), 177 to 197 (HFDW…LIGG), 207 to 227 (FIAA…LVLS), 230 to 250 (LFMD…GVLL), 262 to 282 (AIDP…GMSL), 284 to 304 (LGVL…LVVI), 324 to 344 (MQFA…FSTA), and 356 to 376 (ALLL…MKGI). The RCK N-terminal domain maps to 400–519 (KPQVIVVGFG…AGVTQFSRET (120 aa)).

The protein belongs to the monovalent cation:proton antiporter 2 (CPA2) transporter (TC 2.A.37) family. KefB subfamily. Interacts with the regulatory subunit KefG.

The protein resides in the cell inner membrane. Functionally, pore-forming subunit of a potassium efflux system that confers protection against electrophiles. Catalyzes K(+)/H(+) antiport. The polypeptide is Glutathione-regulated potassium-efflux system protein KefB (Salmonella heidelberg (strain SL476)).